The following is a 1988-amino-acid chain: Sodium channel protein type 9 subunit alpha (1988 aa).

Residues 1-125 lie on the Cytoplasmic side of the membrane; that stretch reads MAMLPPPGPQ…RRISIKILVH (125 aa). The segment covering 26–39 has biased composition (basic and acidic residues); the sequence is RIAERKSKEPKEEK. Residues 26–55 form a disordered region; sequence RIAERKSKEPKEEKKDDDEEAPKPSSDLEA. The stretch at 112–410 is one I repeat; sequence FSPLRRISIK…VAMAYEEQNQ (299 aa). The helical transmembrane segment at 126-145 threads the bilayer; that stretch reads SLFSMLIMCTILTNCIFMTM. The Extracellular portion of the chain corresponds to 146–150; that stretch reads NNPPD. Residues 151-172 form a helical membrane-spanning segment; sequence WTKNVEYTFTGIYTFESLVKIL. The Cytoplasmic segment spans residues 173 to 185; the sequence is ARGFCVGEFTFLR. The helical transmembrane segment at 186 to 204 threads the bilayer; that stretch reads DPWNWLDFVVIVFAYLTEF. Topologically, residues 205 to 210 are extracellular; sequence VNLGNV. N209 is a glycosylation site (N-linked (GlcNAc...) asparagine). The helical transmembrane segment at 211 to 227 threads the bilayer; that stretch reads SALRTFRVLRALKTISV. The Cytoplasmic portion of the chain corresponds to 228–241; it reads IPGLKTIVGALIQS. A helical membrane pass occupies residues 242–267; sequence VKKLSDVMILTVFCLSVFALIGLQLF. Topologically, residues 268 to 346 are extracellular; the sequence is MGNLKHKCFR…PDYGYTSFDT (79 aa). C275 and C324 are oxidised to a cystine. Residue N283 is glycosylated (N-linked (GlcNAc...) asparagine). An intramembrane region (pore-forming) is located at residues 347 to 363; sequence FSWAFLALFRLMTQDYW. Topologically, residues 364–376 are extracellular; sequence ENLYQQTLRAAGK. The helical transmembrane segment at 377 to 402 threads the bilayer; sequence TYMIFFVVVIFLGSFYLINLILAVVA. Over 403–745 the chain is Cytoplasmic; that stretch reads MAYEEQNQAN…CIYFIVMDPF (343 aa). Residues 461-471 are compositionally biased toward low complexity; it reads SSSETSKLSSK. Disordered regions lie at residues 461-543 and 565-611; these read SSSE…RGSL and GSET…SPPM. The span at 474 to 486 shows a compositional bias: basic residues; it reads KERRNRRKKKNQK. Basic and acidic residues-rich tracts occupy residues 489-510 and 573-585; these read SSGEEKGDAEKLSKSESEDSIR and DEHSIFGDNESRR. The II repeat unit spans residues 726–989; sequence CSPYWIKFKK…EEDPDANNLQ (264 aa). A helical membrane pass occupies residues 746-762; sequence VDLAITICIVLNTLFMA. Over 763 to 771 the chain is Extracellular; sequence MEHHPMTEE. The chain crosses the membrane as a helical span at residues 772–796; that stretch reads FKNVLAIGNLVFTGIFAAEMVLKLI. Topologically, residues 797 to 805 are cytoplasmic; the sequence is AMDPYEYFQ. The helical transmembrane segment at 806–822 threads the bilayer; it reads VGWNIFDSLIVTLSLVE. Residues 823–831 lie on the Extracellular side of the membrane; it reads LFLADVEGL. Residues 832-848 form a helical membrane-spanning segment; it reads SVLRSFRLLRVFKLAKS. At 849–865 the chain is on the cytoplasmic side; the sequence is WPTLNMLIKIIGNSVGA. Residues 866 to 888 form a helical membrane-spanning segment; the sequence is LGNLTLVLAIIVFIFAVVGMQLF. Residues 889-915 are Extracellular-facing; it reads GKSYKECVCKINDDCTLPRWHMNDFFH. Residues C897 and C903 are joined by a disulfide bond. An intramembrane region (pore-forming) is located at residues 916–928; the sequence is SFLIVFRVLCGEW. Residues 929-940 are Extracellular-facing; sequence IETMWDCMEVAG. Residues C935 and C944 are joined by a disulfide bond. The chain crosses the membrane as a helical span at residues 941-967; it reads QAMCLIVYMMVMVIGNLVVLNLFLALL. Topologically, residues 968–1187 are cytoplasmic; it reads LSSFSSDNLT…WWNIRKTCYK (220 aa). Positions 1102 to 1148 are disordered; the sequence is NAEELSSDSDSEYSKVRLNRSSSSECSTVDNPLPGEGEEAEAEPMNS. The span at 1120 to 1131 shows a compositional bias: polar residues; sequence NRSSSSECSTVD. Residues 1137–1148 show a composition bias toward acidic residues; the sequence is EGEEAEAEPMNS. One copy of the III repeat lies at 1180-1488; the sequence is NIRKTCYKIV…KKYYNAMKKL (309 aa). Residues 1188–1212 form a helical membrane-spanning segment; that stretch reads IVEHSWFESFIVLMILLSSGALAFE. Topologically, residues 1213–1224 are extracellular; the sequence is DIYIERKKTIKI. Residues 1225 to 1250 traverse the membrane as a helical segment; it reads ILEYADKIFTYIFILEMLLKWIAYGY. The Cytoplasmic portion of the chain corresponds to 1251–1252; the sequence is KT. Residues 1253–1278 form a helical membrane-spanning segment; sequence YFTNAWCWLDFLIVDVSLVTLVANTL. Residues 1279–1287 lie on the Extracellular side of the membrane; sequence GYSDLGPIK. A helical membrane pass occupies residues 1288 to 1304; the sequence is SLRTLRALRPLRALSRF. The Cytoplasmic segment spans residues 1305–1317; it reads EGMRVVVNALIGA. The helical transmembrane segment at 1318–1342 threads the bilayer; that stretch reads IPSIMNVLLVCLIFWLIFSIMGVNL. The Extracellular portion of the chain corresponds to 1343 to 1394; it reads FAGKFYECINTTDGSRFPASQVPNRSECFALMNVSQNVRWKNLKVNFDNVGL. A disulfide bridge links C1350 with C1370. N-linked (GlcNAc...) asparagine glycosylation is found at N1352, N1366, and N1375. Positions 1395–1405 form an intramembrane region, pore-forming; it reads GYLSLLQVATF. Residues 1406 to 1431 are Extracellular-facing; that stretch reads KGWTIIMYAAVDSVNVDKQPKYEYSL. Residues 1432–1457 traverse the membrane as a helical segment; the sequence is YMYIYFVVFIIFGSFFTLNLFIGVII. The Cytoplasmic portion of the chain corresponds to 1458 to 1514; sequence DNFNQQKKKLGGQDIFMTEEQKKYYNAMKKLGSKKPQKPIPRPGNKIQGCIFDLVTN. S1490 carries the post-translational modification Phosphoserine; by PKC. The stretch at 1497-1795 is one IV repeat; that stretch reads IPRPGNKIQG…WEKFDPDATQ (299 aa). A helical membrane pass occupies residues 1515–1534; the sequence is QAFDISIMVLICLNMVTMMV. At 1535–1545 the chain is on the extracellular side; the sequence is EKEGQSQHMTE. Residues 1546–1567 traverse the membrane as a helical segment; the sequence is VLYWINVVFIILFTGECVLKLI. Residues 1568–1576 lie on the Cytoplasmic side of the membrane; that stretch reads SLRHYYFTV. Residues 1577-1598 traverse the membrane as a helical segment; that stretch reads GWNIFDFVVVIISIVGMFLADL. The Extracellular portion of the chain corresponds to 1599–1607; sequence IETYFVSPT. A helical membrane pass occupies residues 1608-1627; the sequence is LFRVIRLARIGRILRLVKGA. The Cytoplasmic segment spans residues 1628-1640; sequence KGIRTLLFALMMS. The helical transmembrane segment at 1641–1663 threads the bilayer; the sequence is LPALFNIGLLLFLVMFIYAIFGM. At 1664 to 1686 the chain is on the extracellular side; sequence SNFAYVKKEDGINDMFNFETFGN. The pore-forming intramembrane region spans 1687 to 1699; it reads SMICLFQITTSAG. The Extracellular segment spans residues 1700–1733; sequence WDGLLAPILNSKPPDCDPKKVHPGSSVEGDCGNP. C1715 and C1730 are disulfide-bonded. A helical transmembrane segment spans residues 1734–1759; it reads SVGIFYFVSYIIISFLVVVNMYIAVI. Residues 1760 to 1988 are Cytoplasmic-facing; the sequence is LENFSVATEE…KGKDSKESKK (229 aa). An IQ domain is found at 1889 to 1918; the sequence is EDVSATVIQRAYRRYRLRQNVKNISSIYIK. A disordered region spans residues 1934-1988; the sequence is FDNVNENSSPEKTDATSSTTSPPSYDSVTKPDKEKYEQDRTEKEDKGKDSKESKK. Residues 1948 to 1961 show a composition bias toward low complexity; that stretch reads ATSSTTSPPSYDSV. The segment covering 1962-1988 has biased composition (basic and acidic residues); the sequence is TKPDKEKYEQDRTEKEDKGKDSKESKK.

It belongs to the sodium channel (TC 1.A.1.10) family. Nav1.7/SCN9A subfamily. As to quaternary structure, the Nav1.7 voltage-gated sodium channel consists of an ion-conducting alpha subunit SCN9A which is functional on its own regulated by one or more beta-1 (SCN1B), beta-2 (SCN2B), beta-3 (SCN3B) and beta-4 (SCN4B) subunits. SCN1B and SCN3B are non-covalently associated with SCN9A. SCN2B and SCN4B are disulfide-linked to SCN9A. SCN1B regulates channel inactivation. Interacts with NEDD4 and NEDD4L; regulates Nav1.7 activity most probably through ubiquitination and subsequent endocytosis. Interacts with TMEM233; modulates the gating properties of NaV1.7. In terms of processing, phosphorylation at Ser-1490 by PKC in a highly conserved cytoplasmic loop increases peak sodium currents. Post-translationally, ubiquitinated by NEDD4L; which may promote its endocytosis. Expressed strongly in dorsal root ganglion, with only minor levels elsewhere in the body, smooth muscle cells, MTC cell line and C-cell carcinoma. Also expressed in vagus nerves within the head and neck region. Isoform 1 is expressed preferentially in the central and peripheral nervous system. Isoform 2 is expressed preferentially in the dorsal root ganglion.

The protein localises to the cell membrane. Its subcellular location is the cell projection. It is found in the neuron projection. It localises to the axon. The enzyme catalyses Na(+)(in) = Na(+)(out). Inhibited by tetrodotoxin. Weakly inhibited by saxitoxin. Inhibited by the spider huwentoxin-IV that binds the extracellular loop S3-S4 of repeat II. Inhibited by the spider protoxin-II that binds the extracellular loop S3-S4 of repeats II and IV. Inhibited by the scorpion alpha-toxins CvIV4 and AaH2. Inhibited by the conotoxin GVIIJ. Inhibited by the spider beta/delta-theraphotoxin-Pre1a. Its function is as follows. Pore-forming subunit of Nav1.7, a voltage-gated sodium (Nav) channel that directly mediates the depolarizing phase of action potentials in excitable membranes. Navs, also called VGSCs (voltage-gated sodium channels) or VDSCs (voltage-dependent sodium channels), operate by switching between closed and open conformations depending on the voltage difference across the membrane. In the open conformation they allow Na(+) ions to selectively pass through the pore, along their electrochemical gradient. The influx of Na(+) ions provokes membrane depolarization, initiating the propagation of electrical signals throughout cells and tissues. Nav1.7 plays a crucial role in controlling the excitability and action potential propagation from nociceptor neurons, thereby contributing to the sensory perception of pain. This Homo sapiens (Human) protein is Sodium channel protein type 9 subunit alpha.